A 151-amino-acid polypeptide reads, in one-letter code: MKKKKALPSLLYLVFIVLLPWGVSSSFNKCLELWIKNWWNTRQSETLLTDIQEKRILERFIELEELSLLDEMIKGKLKTHVQKPPTGIHKEIIQWVKINNEDHLHTILHFSTNIICLAILSGSFFLGKEELVILNSWVQEFFYNLNDSIKA.

The next 2 membrane-spanning stretches (helical) occupy residues 7-27 and 107-127; these read LPSLLYLVFIVLLPWGVSSSF and ILHFSTNIICLAILSGSFFLG.

Belongs to the CemA family.

Its subcellular location is the plastid. It localises to the chloroplast inner membrane. The catalysed reaction is K(+)(in) + H(+)(out) = K(+)(out) + H(+)(in). Functionally, contributes to K(+)/H(+) antiport activity by supporting proton efflux to control proton extrusion and homeostasis in chloroplasts in a light-dependent manner to modulate photosynthesis. Prevents excessive induction of non-photochemical quenching (NPQ) under continuous-light conditions. Indirectly promotes efficient inorganic carbon uptake into chloroplasts. This Aegilops crassa (Persian goatgrass) protein is Potassium/proton antiporter CemA.